We begin with the raw amino-acid sequence, 1408 residues long: Protein patched homolog 1 (1408 aa).

The segment at 1–20 (MLTLLEPPGAKRSPTVGNYN) is disordered. The Cytoplasmic portion of the chain corresponds to 1 to 136 (MLTLLEPPGA…GNTVHRNAWS (136 aa)). A helical transmembrane segment spans residues 137 to 157 (IILAVSMIFAVCCYGLQYVHI). Residues 158 to 649 (ETDIVKLWVA…STSIADMLEE (492 aa)) are Extracellular-facing. The disordered stretch occupies residues 455-479 (STAPIPTTTTLSPEEARAAEEKEKK). Over residues 468–479 (EEARAAEEKEKK) the composition is skewed to basic and acidic residues. The N-linked (GlcNAc...) asparagine glycan is linked to N599. The chain crosses the membrane as a helical span at residues 650–670 (FCQFNYTIILAGYALMLAYAI). The region spanning 654 to 816 (NYTIILAGYA…LTIYPAIISI (163 aa)) is the SSD domain. Residues 671 to 686 (VTQARFDNCLPATESS) are Cytoplasmic-facing. A helical transmembrane segment spans residues 687–707 (MGLALAGVLVVTFASVAGLGL). Residues 708–709 (AT) are Extracellular-facing. A helical transmembrane segment spans residues 710 to 730 (WFGIEFNAATTQIVPFLTLGI). The Cytoplasmic segment spans residues 731-765 (GVDNMFMLLHNYRDVVKLAGGHAEMAILMRETGMS). Residues 766 to 786 (ILCTSINNILSFLTGTLLPIP) form a helical membrane-spanning segment. At 787–795 (ALRSFCAQS) the chain is on the extracellular side. A helical membrane pass occupies residues 796–816 (SILLTFNFIAILTIYPAIISI). Over 817–901 (DLRRKKAQRR…YYYIPFISKP (85 aa)) the chain is Cytoplasmic. A helical membrane pass occupies residues 902–922 (ASKVAIIVGCCALLGASFIGM). Residues 923 to 1175 (RQSTLGLELG…QGIAFTFWEQ (253 aa)) are Extracellular-facing. N-linked (GlcNAc...) asparagine glycans are attached at residues N1026 and N1036. The helical transmembrane segment at 1176–1196 (YLFLTGNLMQAISIITISVFC) threads the bilayer. The Cytoplasmic segment spans residues 1197–1217 (VISVLLFNPWAALMVVCILGI). The next 2 helical transmembrane spans lie at 1218–1238 (MTCE…PVSA) and 1239–1259 (VTLI…VVSF). Residues 1260–1276 (LTALGTRSQRTSSAVDR) are Extracellular-facing. Residues 1277 to 1297 (VFVPVIHGSFSTLLGILMLGF) traverse the membrane as a helical segment. The Cytoplasmic portion of the chain corresponds to 1298-1305 (SEFEFVVK). A helical membrane pass occupies residues 1306-1326 (YFFIVMTALICIGIINGLILL). The Extracellular segment spans residues 1327-1408 (PVLLSWFGPR…GNNTRRLPAV (82 aa)). The segment at 1342 to 1408 (TGGKTTLTLP…GNNTRRLPAV (67 aa)) is disordered. A compositionally biased stretch (low complexity) spans 1387-1408 (TTRTSGGNRGTVGNNTRRLPAV).

The protein belongs to the patched family. As to expression, germ line and its progenitors.

The protein localises to the membrane. Required but not essential for cytokinesis of mitotically proliferating germ cells. The protein is Protein patched homolog 1 (ptc-1) of Caenorhabditis elegans.